The primary structure comprises 330 residues: Aspartate--ammonia ligase (330 aa).

This sequence belongs to the class-II aminoacyl-tRNA synthetase family. AsnA subfamily.

The protein localises to the cytoplasm. It carries out the reaction L-aspartate + NH4(+) + ATP = L-asparagine + AMP + diphosphate + H(+). It participates in amino-acid biosynthesis; L-asparagine biosynthesis; L-asparagine from L-aspartate (ammonia route): step 1/1. The sequence is that of Aspartate--ammonia ligase from Actinobacillus pleuropneumoniae serotype 7 (strain AP76).